Here is a 298-residue protein sequence, read N- to C-terminus: Acetylglutamate kinase (298 aa).

Substrate is bound by residues 73–74 (GG), R95, and N188.

This sequence belongs to the acetylglutamate kinase family. ArgB subfamily.

It localises to the cytoplasm. It catalyses the reaction N-acetyl-L-glutamate + ATP = N-acetyl-L-glutamyl 5-phosphate + ADP. Its pathway is amino-acid biosynthesis; L-arginine biosynthesis; N(2)-acetyl-L-ornithine from L-glutamate: step 2/4. Its function is as follows. Catalyzes the ATP-dependent phosphorylation of N-acetyl-L-glutamate. The chain is Acetylglutamate kinase from Nostoc punctiforme (strain ATCC 29133 / PCC 73102).